We begin with the raw amino-acid sequence, 624 residues long: PTS system mannitol-specific EIICBA component (624 aa).

One can recognise a PTS EIIC type-2 domain in the interval 13–336; the sequence is FGRFLSNMVM…SFVIASFFLK (324 aa). Transmembrane regions (helical) follow at residues 25–46, 51–71, 135–156, 166–186, 274–293, and 314–335; these read IGAFIAWGFITALFIPTGWLPN, KLVGPMITYLLPLLIGYSGGK, SSGIIGMILAILFFWLIGPAVK, VDILVKAHLLPLTSIFVEPAK, VIAGGVSGVFTLVLFNAGLV, and VGVLASVAIAATVSFVIASFFL. The 92-residue stretch at 372-463 folds into the PTS EIIB type-2 domain; sequence QKIFVACDAG…LVQDLSNTKV (92 aa). Catalysis depends on Cys-378, which acts as the Phosphocysteine intermediate; for EIIB activity. A Phosphocysteine; by EIIA modification is found at Cys-378. The 143-residue stretch at 482 to 624 folds into the PTS EIIA type-2 domain; it reads FVLTEKQVFL…VEKVLALLKA (143 aa). The active-site Tele-phosphohistidine intermediate; for EIIA activity is His-542. A Phosphohistidine; by HPr modification is found at His-542.

In terms of assembly, homodimer. In terms of processing, an intramolecular phosphotransfer takes places between His-542 and Cys-378.

The protein localises to the cell inner membrane. The catalysed reaction is D-mannitol(out) + N(pros)-phospho-L-histidyl-[protein] = D-mannitol 1-phosphate(in) + L-histidyl-[protein]. Functionally, the phosphoenolpyruvate-dependent sugar phosphotransferase system (sugar PTS), a major carbohydrate active transport system, catalyzes the phosphorylation of incoming sugar substrates concomitantly with their translocation across the cell membrane. This system is involved in D-mannitol transport. The sequence is that of PTS system mannitol-specific EIICBA component (mtlA) from Pasteurella multocida (strain Pm70).